The chain runs to 335 residues: Glycerol-3-phosphate dehydrogenase [NAD(P)+] (335 aa).

NADPH contacts are provided by Ser-10, Phe-11, Arg-31, and Lys-105. Positions 105, 136, and 138 each coordinate sn-glycerol 3-phosphate. Ala-140 contributes to the NADPH binding site. Residues Lys-191, Asp-244, Ser-254, Arg-255, and Asn-256 each contribute to the sn-glycerol 3-phosphate site. The active-site Proton acceptor is the Lys-191. Residue Arg-255 participates in NADPH binding. NADPH is bound by residues Val-279 and Glu-281.

The protein belongs to the NAD-dependent glycerol-3-phosphate dehydrogenase family.

Its subcellular location is the cytoplasm. The enzyme catalyses sn-glycerol 3-phosphate + NAD(+) = dihydroxyacetone phosphate + NADH + H(+). It catalyses the reaction sn-glycerol 3-phosphate + NADP(+) = dihydroxyacetone phosphate + NADPH + H(+). It participates in membrane lipid metabolism; glycerophospholipid metabolism. Its function is as follows. Catalyzes the reduction of the glycolytic intermediate dihydroxyacetone phosphate (DHAP) to sn-glycerol 3-phosphate (G3P), the key precursor for phospholipid synthesis. The chain is Glycerol-3-phosphate dehydrogenase [NAD(P)+] from Leptospira interrogans serogroup Icterohaemorrhagiae serovar copenhageni (strain Fiocruz L1-130).